We begin with the raw amino-acid sequence, 576 residues long: Potassium-transporting ATPase potassium-binding subunit (576 aa).

The next 12 helical transmembrane spans lie at 3-23, 68-88, 137-157, 179-199, 267-287, 294-314, 339-359, 369-389, 391-411, 430-450, 495-515, and 537-557; these read IFLDIFSFILFFGILTIISPI, LYALLSFNFLGFLVLFLTLLF, GLALQNFLSAASGIVVALVLI, ILYVLLPVAFFSALFLVSQGV, FEAFLIILIPASLVFTFGYMI, WFLYSVMLFVLMLFMGIQYYF, FGIGGTVLFSSITTATSCGAV, LGGLVPMSLISLGEIIFGGVG, GLYGMIAMVIIAVFVAGLMIG, VVITLVSGITALLLTTLALYT, ITTGLAMLIGRFIPIIAVFYM, and LVFGVWLVFIIIVVGALTFLP.

This sequence belongs to the KdpA family. As to quaternary structure, the system is composed of three essential subunits: KdpA, KdpB and KdpC.

It localises to the cell inner membrane. Functionally, part of the high-affinity ATP-driven potassium transport (or Kdp) system, which catalyzes the hydrolysis of ATP coupled with the electrogenic transport of potassium into the cytoplasm. This subunit binds the periplasmic potassium ions and delivers the ions to the membrane domain of KdpB through an intramembrane tunnel. In Hydrogenobaculum sp. (strain Y04AAS1), this protein is Potassium-transporting ATPase potassium-binding subunit.